The sequence spans 379 residues: Chaperone protein DnaJ (379 aa).

A J domain is found at 5–70 (DYYEILGLDK…QKKAQYDQFG (66 aa)). The segment at 135-217 (GVEKEISVTR…CRGKGIVRKH (83 aa)) adopts a CR-type zinc-finger fold. Zn(2+) is bound by residues cysteine 148, cysteine 151, cysteine 165, cysteine 168, cysteine 191, cysteine 194, cysteine 205, and cysteine 208. CXXCXGXG motif repeat units follow at residues 148–155 (CETCNGTG), 165–172 (CDKCNGTG), 191–198 (CDKCGGRG), and 205–212 (CEECRGKG).

This sequence belongs to the DnaJ family. In terms of assembly, homodimer. Zn(2+) serves as cofactor.

The protein localises to the cytoplasm. Participates actively in the response to hyperosmotic and heat shock by preventing the aggregation of stress-denatured proteins and by disaggregating proteins, also in an autonomous, DnaK-independent fashion. Unfolded proteins bind initially to DnaJ; upon interaction with the DnaJ-bound protein, DnaK hydrolyzes its bound ATP, resulting in the formation of a stable complex. GrpE releases ADP from DnaK; ATP binding to DnaK triggers the release of the substrate protein, thus completing the reaction cycle. Several rounds of ATP-dependent interactions between DnaJ, DnaK and GrpE are required for fully efficient folding. Also involved, together with DnaK and GrpE, in the DNA replication of plasmids through activation of initiation proteins. The polypeptide is Chaperone protein DnaJ (Clostridium kluyveri (strain ATCC 8527 / DSM 555 / NBRC 12016 / NCIMB 10680 / K1)).